A 138-amino-acid chain; its full sequence is Small ribosomal subunit protein uS11c (138 aa).

It belongs to the universal ribosomal protein uS11 family. In terms of assembly, part of the 30S ribosomal subunit.

It localises to the plastid. The protein localises to the chloroplast. In Phaseolus vulgaris (Kidney bean), this protein is Small ribosomal subunit protein uS11c.